A 353-amino-acid chain; its full sequence is Photosystem II D2 protein (353 aa).

At Thr2 the chain carries N-acetylthreonine. Thr2 bears the Phosphothreonine mark. The chain crosses the membrane as a helical span at residues 41-61; sequence CAYFSLGGWFTGTTFVTSWYT. A chlorophyll a-binding site is contributed by His118. Residues 125–141 form a helical membrane-spanning segment; that stretch reads GFMLRQFELARSVQLRP. 2 residues coordinate pheophytin a: Gln130 and Asn143. The chain crosses the membrane as a helical span at residues 153–166; the sequence is VFVSVFLIYPLGQS. Chlorophyll a is bound at residue His198. The chain crosses the membrane as a helical span at residues 208–228; that stretch reads AALLCAIHGATVENTLFEDGD. His215 and Phe262 together coordinate a plastoquinone. His215 is a binding site for Fe cation. His269 provides a ligand contact to Fe cation. Residues 279–295 form a helical membrane-spanning segment; sequence GLWMSAIGVVGLALNLR.

Belongs to the reaction center PufL/M/PsbA/D family. PSII is composed of 1 copy each of membrane proteins PsbA, PsbB, PsbC, PsbD, PsbE, PsbF, PsbH, PsbI, PsbJ, PsbK, PsbL, PsbM, PsbT, PsbX, PsbY, PsbZ, Psb30/Ycf12, at least 3 peripheral proteins of the oxygen-evolving complex and a large number of cofactors. It forms dimeric complexes. The D1/D2 heterodimer binds P680, chlorophylls that are the primary electron donor of PSII, and subsequent electron acceptors. It shares a non-heme iron and each subunit binds pheophytin, quinone, additional chlorophylls, carotenoids and lipids. There is also a Cl(-1) ion associated with D1 and D2, which is required for oxygen evolution. The PSII complex binds additional chlorophylls, carotenoids and specific lipids. is required as a cofactor.

The protein resides in the plastid. The protein localises to the chloroplast thylakoid membrane. The catalysed reaction is 2 a plastoquinone + 4 hnu + 2 H2O = 2 a plastoquinol + O2. In terms of biological role, photosystem II (PSII) is a light-driven water:plastoquinone oxidoreductase that uses light energy to abstract electrons from H(2)O, generating O(2) and a proton gradient subsequently used for ATP formation. It consists of a core antenna complex that captures photons, and an electron transfer chain that converts photonic excitation into a charge separation. The D1/D2 (PsbA/PsbD) reaction center heterodimer binds P680, the primary electron donor of PSII as well as several subsequent electron acceptors. D2 is needed for assembly of a stable PSII complex. This is Photosystem II D2 protein from Physcomitrium patens (Spreading-leaved earth moss).